A 90-amino-acid chain; its full sequence is MTDQQLDYQVTVEELSALMKRTAGVHVDPVTLRQQADDGFDTFGLDSLGLLGIVAELEKRYGLGLPEQAERCKTPADFLALVNGALKTGV.

A Carrier domain is found at glutamine 9–valine 90. Serine 47 carries the O-(pantetheine 4'-phosphoryl)serine modification.

4'-phosphopantetheine is transferred from CoA to a specific serine of the apo-ACP-like protein.

In terms of biological role, involved in developmentally regulated synthesis of a compound biosynthetically related to polyketide antibiotics which is essential for spore color in Streptomyces coelicolor. The chain is Probable acyl carrier protein from Streptomyces coelicolor (strain ATCC BAA-471 / A3(2) / M145).